The primary structure comprises 603 residues: Sabinene hydrate synthase, chloroplastic (603 aa).

Residues 1-47 constitute a chloroplast transit peptide; it reads MSTISINHVGLLRNPLHGKSKRASINKSWSLCLPRSSSASRLVKPCR. Mn(2+) contacts are provided by aspartate 357 and aspartate 361. A DDXXD motif motif is present at residues 357-361; sequence DDVYD. Homodimerization stretches follow at residues 363 to 369 and 435 to 472; these read YGTLDEL and EAEW…VSIP. 2 residues coordinate Mn(2+): aspartate 501 and glutamate 509.

It belongs to the terpene synthase family. In terms of assembly, homodimer. Mn(2+) is required as a cofactor. Requires Mg(2+) as cofactor.

The protein resides in the plastid. It is found in the chloroplast. It carries out the reaction (2E)-geranyl diphosphate + H2O = sabinene hydrate + diphosphate. It participates in secondary metabolite biosynthesis; terpenoid biosynthesis. Functionally, involved in the biosynthesis of phenolic monoterpenes natural products. Monoterpene synthase which catalyzes the conversion of geranyl diphosphate (GPP) to sabinene hydrate, mainly (Z)-sabinene hydrate and to a lower extent (E)-sabinene hydrate, and the formation of minor amounts and traces of several other monoterpenes (e.g. mainly alpha-thujene, alpha-pinene and myrcene). The sequence is that of Sabinene hydrate synthase, chloroplastic from Thymus vulgaris (Thyme).